Consider the following 439-residue polypeptide: COBRA-like protein 7 (439 aa).

An N-terminal signal peptide occupies residues Met1 to Ala22. Residues Asn138, Asn181, Asn186, Asn232, Asn312, and Asn346 are each glycosylated (N-linked (GlcNAc...) asparagine). Residue Asn412 is the site of GPI-anchor amidated asparagine attachment. Residues Gly413–Met439 constitute a propeptide, removed in mature form.

The protein belongs to the COBRA family.

The protein resides in the cell membrane. Its function is as follows. Involved in determining the orientation of cell expansion, probably by playing an important role in cellulose deposition. May act by recruiting cellulose synthesizing complexes to discrete positions on the cell surface. The polypeptide is COBRA-like protein 7 (BC1LP1) (Oryza sativa subsp. japonica (Rice)).